The following is a 262-amino-acid chain: Type III pantothenate kinase (262 aa).

6 to 13 is an ATP binding site; it reads DAGNTNMV. Residues tyrosine 100 and 107–110 contribute to the substrate site; that span reads GADR. Aspartate 109 functions as the Proton acceptor in the catalytic mechanism. Aspartate 129 contacts K(+). Threonine 132 lines the ATP pocket. Threonine 184 contacts substrate.

Belongs to the type III pantothenate kinase family. In terms of assembly, homodimer. Requires NH4(+) as cofactor. The cofactor is K(+).

It localises to the cytoplasm. It catalyses the reaction (R)-pantothenate + ATP = (R)-4'-phosphopantothenate + ADP + H(+). It participates in cofactor biosynthesis; coenzyme A biosynthesis; CoA from (R)-pantothenate: step 1/5. Functionally, catalyzes the phosphorylation of pantothenate (Pan), the first step in CoA biosynthesis. This Clostridium tetani (strain Massachusetts / E88) protein is Type III pantothenate kinase.